The sequence spans 190 residues: Potassium-transporting ATPase KdpC subunit (190 aa).

A helical transmembrane segment spans residues 13–33 (VGFLLLTLVCGVIYPGVVTII).

The protein belongs to the KdpC family. As to quaternary structure, the system is composed of three essential subunits: KdpA, KdpB and KdpC.

It localises to the cell membrane. Part of the high-affinity ATP-driven potassium transport (or Kdp) system, which catalyzes the hydrolysis of ATP coupled with the electrogenic transport of potassium into the cytoplasm. This subunit acts as a catalytic chaperone that increases the ATP-binding affinity of the ATP-hydrolyzing subunit KdpB by the formation of a transient KdpB/KdpC/ATP ternary complex. This is Potassium-transporting ATPase KdpC subunit from Listeria innocua serovar 6a (strain ATCC BAA-680 / CLIP 11262).